Reading from the N-terminus, the 198-residue chain is Recombination protein RecR (198 aa).

Residues 57–72 form a C4-type zinc finger; the sequence is CSICGNLTESDPCAIC. The Toprim domain maps to 80-175; the sequence is TTILVVEESK…KVTRLARGLA (96 aa).

Belongs to the RecR family.

In terms of biological role, may play a role in DNA repair. It seems to be involved in an RecBC-independent recombinational process of DNA repair. It may act with RecF and RecO. The protein is Recombination protein RecR of Lactococcus lactis subsp. lactis (strain IL1403) (Streptococcus lactis).